Consider the following 109-residue polypeptide: Large ribosomal subunit protein uL24 (109 aa).

The protein belongs to the universal ribosomal protein uL24 family. Part of the 50S ribosomal subunit.

Functionally, one of two assembly initiator proteins, it binds directly to the 5'-end of the 23S rRNA, where it nucleates assembly of the 50S subunit. In terms of biological role, one of the proteins that surrounds the polypeptide exit tunnel on the outside of the subunit. This chain is Large ribosomal subunit protein uL24, found in Ehrlichia canis (strain Jake).